The chain runs to 657 residues: Transmembrane protein 232 (657 aa).

2 helical membrane passes run I168 to F188 and W353 to A373.

It localises to the membrane. Its function is as follows. Plays a critical role for male fertility and sperm motility by regulating sperm cytoplasm removal and maintaining axoneme integrity. This Homo sapiens (Human) protein is Transmembrane protein 232 (TMEM232).